Here is a 72-residue protein sequence, read N- to C-terminus: Translation initiation factor IF-1 (72 aa).

Residues 1–72 (MAKDDVIEVE…TRGRITYRYK (72 aa)) enclose the S1-like domain. The residue at position 60 (Tyr60) is a Phosphotyrosine.

It belongs to the IF-1 family. As to quaternary structure, component of the 30S ribosomal translation pre-initiation complex which assembles on the 30S ribosome in the order IF-2 and IF-3, IF-1 and N-formylmethionyl-tRNA(fMet); mRNA recruitment can occur at any time during PIC assembly.

It localises to the cytoplasm. One of the essential components for the initiation of protein synthesis. Stabilizes the binding of IF-2 and IF-3 on the 30S subunit to which N-formylmethionyl-tRNA(fMet) subsequently binds. Helps modulate mRNA selection, yielding the 30S pre-initiation complex (PIC). Upon addition of the 50S ribosomal subunit IF-1, IF-2 and IF-3 are released leaving the mature 70S translation initiation complex. In Geobacillus kaustophilus (strain HTA426), this protein is Translation initiation factor IF-1.